A 1028-amino-acid polypeptide reads, in one-letter code: Contactin-3 (1028 aa).

The N-terminal stretch at M1–G19 is a signal peptide. 6 consecutive Ig-like C2-type domains span residues P26 to Q117, E122 to L208, P227 to T313, P318 to K402, P408 to T497, and P499 to I593. 5 disulfide bridges follow: C50–C100, C144–C196, C249–C297, C339–C386, and C431–C479. N-linked (GlcNAc...) asparagine glycans are attached at residues N65 and N193. N375, N468, and N489 each carry an N-linked (GlcNAc...) asparagine glycan. A disulfide bond links C521 and C577. 4 consecutive Fibronectin type-III domains span residues P600–A698, P703–E800, A805–T901, and P902–D998. The segment at G684–S713 is disordered. N-linked (GlcNAc...) asparagine glycans are attached at residues N765, N860, N895, N913, N931, and N956. The GPI-anchor amidated serine moiety is linked to residue S1002. The propeptide at T1003–W1028 is removed in mature form.

Belongs to the immunoglobulin superfamily. Contactin family. As to quaternary structure, interacts with PTPRG. As to expression, in brain, it is expressed in frontal lobe, occipital lobe, cerebellum and amygdala.

The protein resides in the cell membrane. Functionally, contactins mediate cell surface interactions during nervous system development. Has some neurite outgrowth-promoting activity. The chain is Contactin-3 (CNTN3) from Homo sapiens (Human).